The chain runs to 58 residues: Rho-conotoxin TIA (58 aa).

Residues 1-16 (MFTVFLLVVLATTGVS) form the signal peptide. The propeptide occupies 17–38 (FTLDRASDGGNAVAKKSDVTAR). The interval 40 to 42 (NWR) is interaction with ADRA1B. Cystine bridges form between cysteine 43–cysteine 49 and cysteine 44–cysteine 57. A lacks the Ser-Xaa-Pro motif that is crucial for potent interaction with nAChR region spans residues 45 to 47 (LIP). A Cysteine amide modification is found at cysteine 57.

This sequence belongs to the conotoxin A superfamily. Expressed by the venom duct.

Its subcellular location is the secreted. In terms of biological role, allosteric inhibitor of alpha-1B adrenergic receptors (ADRA1B). Binds to an allosteric modulatory site on transmembrane helix 6 and 7 at the base of extracellular loop 3 of ADRA1B. Also weakly inhibits alpha-1A (ADRA1A) and alpha-1D (ADRA1D) adrenergic receptors in a competitive manner. Potently inhibits contractions of vas deferens, spleen and aorta in response to noradrenaline. May also inhibits nicotinic acetylcholine receptors with a possible distinct nAChR binding mode from other alpha-conotoxins, due to a different three residue motif (lacks the Ser-Xaa-Pro motif). This chain is Rho-conotoxin TIA, found in Conus tulipa (Fish-hunting cone snail).